Here is a 198-residue protein sequence, read N- to C-terminus: NAD(P)H dehydrogenase (quinone) (198 aa).

The Flavodoxin-like domain maps to 4 to 189 (VLVLYYSMYG…SIARYQGEYV (186 aa)). Residues 10-15 (SMYGHI) and 78-80 (TRF) each bind FMN. Tyr-12 contributes to the NAD(+) binding site. Substrate is bound at residue Trp-98. Residues 113 to 118 (STGTGG) and His-133 contribute to the FMN site.

The protein belongs to the WrbA family. FMN is required as a cofactor.

It carries out the reaction a quinone + NADH + H(+) = a quinol + NAD(+). The catalysed reaction is a quinone + NADPH + H(+) = a quinol + NADP(+). This Escherichia coli O157:H7 protein is NAD(P)H dehydrogenase (quinone).